Reading from the N-terminus, the 144-residue chain is VISAEIMQVHHQKHHATYVNNLNAAEEQLAEAIHKQDVTKMIALQSAIKFNGGGHINHSIFWNNLCPSGGGEPTGPLAEAITRDFGSFEAFKEKMTAATVAVQGSGWGWLGLDPTSKKLRIVACPNQDPLEGTTGLKPLLGIDV.

Residues histidine 10, histidine 58, and aspartate 143 each contribute to the Mn(2+) site.

It belongs to the iron/manganese superoxide dismutase family. Homotetramer. Mn(2+) is required as a cofactor.

It is found in the mitochondrion matrix. The enzyme catalyses 2 superoxide + 2 H(+) = H2O2 + O2. In terms of biological role, destroys superoxide anion radicals which are normally produced within the cells and which are toxic to biological systems. The protein is Superoxide dismutase [Mn], mitochondrial of Branchiostoma floridae (Florida lancelet).